Consider the following 246-residue polypeptide: Protein crossbronx (246 aa).

Residues Gln20 to Ala177 form the UBC core domain.

It belongs to the ubiquitin-conjugating enzyme family. FTS subfamily.

The protein is Protein crossbronx (cbx) of Drosophila grimshawi (Hawaiian fruit fly).